We begin with the raw amino-acid sequence, 1513 residues long: Exo-beta-1,6-galactobiohydrolase (1513 aa).

A signal peptide spans 1–31 (MRVLSKSLAAMVAAATLVGGGAFAVAGTAYA). The 136-residue stretch at 666 to 801 (VADTTSGDSA…PSANQTWTLR (136 aa)) folds into the Ricin B-type lectin domain. 2 consecutive F5/8 type C domains span residues 965-1112 (AIYV…AFVT) and 1116-1273 (GAAK…VFAQ). The disordered stretch occupies residues 1456-1480 (VAPGPEEQKPGNTNKPGATGNGNKN). Polar residues predominate over residues 1465–1480 (PGNTNKPGATGNGNKN). Residues 1489–1509 (VAAIAGAVALLAAAAGALFML) traverse the membrane as a helical segment.

This sequence belongs to the glycosyl hydrolase 30 family.

The protein localises to the cell membrane. It catalyses the reaction Hydrolysis of (1-&gt;6)-beta-D-galactosidic linkages in arabinogalactan proteins and (1-&gt;3):(1-&gt;6)-beta-galactans to yield (1-&gt;6)-beta-galactobiose as the final product.. Involved in the type II arabinogalactan (AG) side chains degradation. Specifically releases the non-reducing terminal beta-1,6-galactobiose (beta-1,6-Gal2) from both dearabinosylated larch AG and polymeric beta-1,6-galactan chains by an exo-mode of action. Shows lower activity with larch AG, and very weak activity with dearabinosylated gum arabic, gum arabic and potato galactan. Can probably release beta-1,6-Gal2 from the internal side chains of type II AG. The protein is Exo-beta-1,6-galactobiohydrolase of Bifidobacterium longum subsp. longum (strain ATCC 15707 / DSM 20219 / JCM 1217 / NCTC 11818 / E194b).